A 457-amino-acid polypeptide reads, in one-letter code: tRNA modification GTPase MnmE (457 aa).

(6S)-5-formyl-5,6,7,8-tetrahydrofolate is bound by residues arginine 22, glutamate 83, and arginine 122. The TrmE-type G domain occupies 219–378; the sequence is GLATAIIGRP…LEEAIKALFF (160 aa). Asparagine 229 contacts K(+). GTP is bound by residues 229-234, 248-254, and 273-276; these read NVGKSS, TDIAGTT, and DTAG. Serine 233 provides a ligand contact to Mg(2+). Positions 248, 250, and 253 each coordinate K(+). Threonine 254 provides a ligand contact to Mg(2+). Lysine 457 contributes to the (6S)-5-formyl-5,6,7,8-tetrahydrofolate binding site.

The protein belongs to the TRAFAC class TrmE-Era-EngA-EngB-Septin-like GTPase superfamily. TrmE GTPase family. In terms of assembly, homodimer. Heterotetramer of two MnmE and two MnmG subunits. K(+) is required as a cofactor.

It is found in the cytoplasm. Functionally, exhibits a very high intrinsic GTPase hydrolysis rate. Involved in the addition of a carboxymethylaminomethyl (cmnm) group at the wobble position (U34) of certain tRNAs, forming tRNA-cmnm(5)s(2)U34. This Listeria innocua serovar 6a (strain ATCC BAA-680 / CLIP 11262) protein is tRNA modification GTPase MnmE.